We begin with the raw amino-acid sequence, 144 residues long: Prefoldin subunit alpha (144 aa).

This sequence belongs to the prefoldin subunit alpha family. Heterohexamer of two alpha and four beta subunits.

The protein localises to the cytoplasm. In terms of biological role, molecular chaperone capable of stabilizing a range of proteins. Seems to fulfill an ATP-independent, HSP70-like function in archaeal de novo protein folding. This chain is Prefoldin subunit alpha, found in Methanococcus maripaludis (strain DSM 14266 / JCM 13030 / NBRC 101832 / S2 / LL).